A 649-amino-acid chain; its full sequence is Glucan endo-1,3-beta-glucosidase btgC (649 aa).

Disordered stretches follow at residues 1-50 (MGDR…AHTH) and 110-224 (YHTT…AGGA). The Cytoplasmic portion of the chain corresponds to 1-274 (MGDRSEQYGD…PRPSGASRKR (274 aa)). The span at 144–157 (GSSAALSAAGAPAG) shows a compositional bias: low complexity. The span at 198–208 (NPDDILDDGDD) shows a compositional bias: acidic residues. The helical; Signal-anchor for type II membrane protein transmembrane segment at 275 to 295 (GWIIGGILAFIVIGAIVGGAV) threads the bilayer. Topologically, residues 296–649 (GGTLGNRRSE…IPDCGGKTAA (354 aa)) are extracellular. The interval 301-329 (NRRSETASESSEVSADDDTETNGDLDKNS) is disordered. A compositionally biased stretch (acidic residues) spans 314–323 (SADDDTETNG). 3 N-linked (GlcNAc...) asparagine glycosylation sites follow: asparagine 369, asparagine 392, and asparagine 420. Glutamate 452 serves as the catalytic Proton donor. Glutamate 551 functions as the Nucleophile in the catalytic mechanism. A glycan (N-linked (GlcNAc...) asparagine) is linked at asparagine 596.

The protein belongs to the glycosyl hydrolase 17 family.

The protein localises to the cell membrane. The enzyme catalyses Hydrolysis of (1-&gt;3)-beta-D-glucosidic linkages in (1-&gt;3)-beta-D-glucans.. In terms of biological role, glucanases play a role in cell expansion during growth, in cell-cell fusion during mating, and in spore release during sporulation. This enzyme may be involved in beta-glucan degradation. Active on laminarin and lichenan. The chain is Glucan endo-1,3-beta-glucosidase btgC (btgC) from Emericella nidulans (strain FGSC A4 / ATCC 38163 / CBS 112.46 / NRRL 194 / M139) (Aspergillus nidulans).